The sequence spans 390 residues: Probable tRNA pseudouridine synthase D (390 aa).

The active-site Nucleophile is the Asp-93. A TRUD domain is found at 166–353 (YVLNYYGIQR…YGTRRKMITP (188 aa)).

It belongs to the pseudouridine synthase TruD family.

It catalyses the reaction uridine(13) in tRNA = pseudouridine(13) in tRNA. Could be responsible for synthesis of pseudouridine from uracil-13 in transfer RNAs. The protein is Probable tRNA pseudouridine synthase D of Methanococcus maripaludis (strain C5 / ATCC BAA-1333).